Consider the following 430-residue polypeptide: GTPase Obg (430 aa).

In terms of domain architecture, Obg spans 1 to 158 (MFVDQVKINV…IELQLELKVL (158 aa)). Positions 122-143 (GGRGNMRFASPRNPAPEISENG) are disordered. The 176-residue stretch at 159-334 (ADVGLLGFPS…LVARTADVLE (176 aa)) folds into the OBG-type G domain. Residues 165-172 (GFPSVGKS), 190-194 (FTTLV), 212-215 (DIPG), 282-285 (TKMD), and 315-317 (SSI) each bind GTP. 2 residues coordinate Mg(2+): Ser-172 and Thr-192. In terms of domain architecture, OCT spans 353–430 (YEFSSEKDFT…ILDFVFEFVE (78 aa)).

It belongs to the TRAFAC class OBG-HflX-like GTPase superfamily. OBG GTPase family. As to quaternary structure, monomer. Requires Mg(2+) as cofactor.

The protein localises to the cytoplasm. Its function is as follows. An essential GTPase which binds GTP, GDP and possibly (p)ppGpp with moderate affinity, with high nucleotide exchange rates and a fairly low GTP hydrolysis rate. Plays a role in control of the cell cycle, stress response, ribosome biogenesis and in those bacteria that undergo differentiation, in morphogenesis control. The chain is GTPase Obg from Pediococcus pentosaceus (strain ATCC 25745 / CCUG 21536 / LMG 10740 / 183-1w).